The chain runs to 401 residues: Patatin-like protein 4 (401 aa).

In terms of domain architecture, PNPLA spans 17–218 (LSLDGGGVRG…TANDPTLVGM (202 aa)). Positions 21-26 (GGGVRG) match the GXGXXG motif. The short motif at 60–64 (GTSTG) is the GXSXG element. Ser-62 serves as the catalytic Nucleophile. The Proton acceptor role is filled by Asp-205. The short motif at 205–207 (DGG) is the DGA/G element.

It belongs to the patatin family.

Its function is as follows. Possesses non-specific lipolytic acyl hydrolase (LAH) activity. Hydrolyzes phospholipids as well as galactolipids. May play a role in disease resistance. This Arabidopsis thaliana (Mouse-ear cress) protein is Patatin-like protein 4 (PLP4).